The primary structure comprises 185 residues: Large ribosomal subunit protein uL5 (185 aa).

The protein belongs to the universal ribosomal protein uL5 family. Part of the 50S ribosomal subunit; part of the 5S rRNA/L5/L18/L25 subcomplex. Contacts the 5S rRNA and the P site tRNA. Forms a bridge to the 30S subunit in the 70S ribosome.

In terms of biological role, this is one of the proteins that bind and probably mediate the attachment of the 5S RNA into the large ribosomal subunit, where it forms part of the central protuberance. In the 70S ribosome it contacts protein S13 of the 30S subunit (bridge B1b), connecting the 2 subunits; this bridge is implicated in subunit movement. Contacts the P site tRNA; the 5S rRNA and some of its associated proteins might help stabilize positioning of ribosome-bound tRNAs. The sequence is that of Large ribosomal subunit protein uL5 from Nitrobacter winogradskyi (strain ATCC 25391 / DSM 10237 / CIP 104748 / NCIMB 11846 / Nb-255).